The sequence spans 350 residues: Chorismate synthase (350 aa).

NADP(+) is bound by residues arginine 39 and arginine 45. FMN-binding positions include 119 to 121 (RSS), 213 to 214 (QA), glycine 258, 273 to 277 (KPIPT), and arginine 299.

Belongs to the chorismate synthase family. In terms of assembly, homotetramer. FMNH2 serves as cofactor.

It carries out the reaction 5-O-(1-carboxyvinyl)-3-phosphoshikimate = chorismate + phosphate. It participates in metabolic intermediate biosynthesis; chorismate biosynthesis; chorismate from D-erythrose 4-phosphate and phosphoenolpyruvate: step 7/7. In terms of biological role, catalyzes the anti-1,4-elimination of the C-3 phosphate and the C-6 proR hydrogen from 5-enolpyruvylshikimate-3-phosphate (EPSP) to yield chorismate, which is the branch point compound that serves as the starting substrate for the three terminal pathways of aromatic amino acid biosynthesis. This reaction introduces a second double bond into the aromatic ring system. The polypeptide is Chorismate synthase (Thermoanaerobacter pseudethanolicus (strain ATCC 33223 / 39E) (Clostridium thermohydrosulfuricum)).